Reading from the N-terminus, the 95-residue chain is uncharacterized protein (95 aa).

The helical transmembrane segment at serine 27–threonine 47 threads the bilayer.

The protein localises to the membrane. This is an uncharacterized protein from Homo sapiens (Human).